We begin with the raw amino-acid sequence, 132 residues long: UPF0299 membrane protein YohJ (132 aa).

The next 4 membrane-spanning stretches (helical) occupy residues 5-25 (LNIIWQYLRAFVLIYACLYAG), 26-46 (IFIASLLPVTIPGSIIGMLIL), 63-83 (GCYVLIRYMALLFVPIGVGVM), and 93-113 (FGPVVVSCAVSTLVVFLVVSW).

The protein belongs to the UPF0299 family.

It localises to the cell inner membrane. This chain is UPF0299 membrane protein YohJ, found in Shigella flexneri serotype 5b (strain 8401).